A 215-amino-acid chain; its full sequence is dITP/XTP pyrophosphatase (215 aa).

13–18 (THNIGK) contacts substrate. The Proton acceptor role is filled by Asp74. A Mg(2+)-binding site is contributed by Asp74. Residues Ser75, 163–166 (FGFD), Lys186, and 199–200 (HR) contribute to the substrate site.

It belongs to the HAM1 NTPase family. Homodimer. Mg(2+) serves as cofactor.

It carries out the reaction XTP + H2O = XMP + diphosphate + H(+). The catalysed reaction is dITP + H2O = dIMP + diphosphate + H(+). The enzyme catalyses ITP + H2O = IMP + diphosphate + H(+). In terms of biological role, pyrophosphatase that catalyzes the hydrolysis of nucleoside triphosphates to their monophosphate derivatives, with a high preference for the non-canonical purine nucleotides XTP (xanthosine triphosphate), dITP (deoxyinosine triphosphate) and ITP. Seems to function as a house-cleaning enzyme that removes non-canonical purine nucleotides from the nucleotide pool, thus preventing their incorporation into DNA/RNA and avoiding chromosomal lesions. The polypeptide is dITP/XTP pyrophosphatase (Bartonella henselae (strain ATCC 49882 / DSM 28221 / CCUG 30454 / Houston 1) (Rochalimaea henselae)).